The primary structure comprises 47 residues: PhoP/PhoQ regulator MgrB (47 aa).

Residues 6–26 form a helical membrane-spanning segment; that stretch reads WVVLGIVVVVCLLLWAQVFNI.

The protein belongs to the MgrB family. May form homooligomers. Probably interacts with the periplasmic domain of PhoQ.

It localises to the cell inner membrane. In terms of biological role, phoP-regulated transcription is redox-sensitive, being activated when the periplasm becomes more reducing. MgrB acts between DsbA/DsbB and PhoP/PhoQ in this pathway. Represses PhoP/PhoQ signaling, possibly by binding to the periplasmic domain of PhoQ, altering its activity and that of downstream effector PhoP. The chain is PhoP/PhoQ regulator MgrB from Salmonella agona (strain SL483).